A 100-amino-acid chain; its full sequence is MYB-like transcription factor TCL2 (100 aa).

The Myb-like domain maps to 37 to 74 (TEQEEDLIFRMHRLVGDRWDLIAGRVVGREAKDIERYW).

As to quaternary structure, interacts with GL3. Expressed in cotyledons, petioles, rosette leaves, hydathodes, cauline leaves, stems, pedicels and flower buds.

The protein resides in the nucleus. MYB-type transcription factor involved in trichome cell specification. Acts as a negative regulator of trichome patterning and formation. May function by suppressing the expression of GL3. The chain is MYB-like transcription factor TCL2 (TCL2) from Arabidopsis thaliana (Mouse-ear cress).